A 760-amino-acid polypeptide reads, in one-letter code: Serine/threonine-protein kinase Haspin homolog ALK1 (760 aa).

A phosphoserine mark is found at Ser-76 and Ser-79. 4 disordered regions span residues 76-100 (SDASLNVTTGNNTSRKTTSNSKKRW), 123-153 (SSFTSESHKDRESRNVLQQKRKSLQSYSSLD), 187-264 (DDIS…STVS), and 362-408 (KRNS…CSYS). The segment covering 78 to 95 (ASLNVTTGNNTSRKTTSN) has biased composition (polar residues). A KEN box motif is present at residues 200-202 (KEN). A compositionally biased stretch (polar residues) spans 209-220 (KKNSSIASTSSE). The D box signature appears at 224 to 232 (RTPLKPLVN). Polar residues predominate over residues 237–250 (PTSQPQQQQPLYNA). Over residues 251-264 (SLSSRRSSISSTVS) the composition is skewed to low complexity. Residues 362–386 (KRNSQSSLKHKSSHASLQKFKRNKG) are compositionally biased toward basic residues. Over residues 398–408 (NSSNDDSCSYS) the composition is skewed to low complexity. The region spanning 468–760 (NCDIKRILNP…NTGDLLKLYK (293 aa)) is the Protein kinase domain. ATP-binding positions include 474–482 (ILNPAKGDV) and Lys-510.

Belongs to the protein kinase superfamily. Ser/Thr protein kinase family. Haspin subfamily. In terms of processing, periodically phosphorylated during the cell cycle with a phosphorylation peak during mitosis and hyperphosphorylated after DNA damage.

It carries out the reaction L-seryl-[protein] + ATP = O-phospho-L-seryl-[protein] + ADP + H(+). It catalyses the reaction L-threonyl-[protein] + ATP = O-phospho-L-threonyl-[protein] + ADP + H(+). Its function is as follows. Serine/threonine haspin-like protein kinase involved in cell cycle regulation. The polypeptide is Serine/threonine-protein kinase Haspin homolog ALK1 (ALK1) (Saccharomyces cerevisiae (strain ATCC 204508 / S288c) (Baker's yeast)).